The chain runs to 241 residues: Pyridoxine 5'-phosphate synthase (241 aa).

Position 7 (Asn-7) interacts with 3-amino-2-oxopropyl phosphate. Residue 9-10 (DH) coordinates 1-deoxy-D-xylulose 5-phosphate. Arg-18 is a 3-amino-2-oxopropyl phosphate binding site. Residue His-43 is the Proton acceptor of the active site. Arg-45 and His-50 together coordinate 1-deoxy-D-xylulose 5-phosphate. The active-site Proton acceptor is the Glu-70. Thr-100 is a 1-deoxy-D-xylulose 5-phosphate binding site. The active-site Proton donor is the His-191. Residues Gly-192 and 213 to 214 (GH) each bind 3-amino-2-oxopropyl phosphate.

This sequence belongs to the PNP synthase family. As to quaternary structure, homooctamer; tetramer of dimers.

It is found in the cytoplasm. The catalysed reaction is 3-amino-2-oxopropyl phosphate + 1-deoxy-D-xylulose 5-phosphate = pyridoxine 5'-phosphate + phosphate + 2 H2O + H(+). It functions in the pathway cofactor biosynthesis; pyridoxine 5'-phosphate biosynthesis; pyridoxine 5'-phosphate from D-erythrose 4-phosphate: step 5/5. Functionally, catalyzes the complicated ring closure reaction between the two acyclic compounds 1-deoxy-D-xylulose-5-phosphate (DXP) and 3-amino-2-oxopropyl phosphate (1-amino-acetone-3-phosphate or AAP) to form pyridoxine 5'-phosphate (PNP) and inorganic phosphate. In Solidesulfovibrio magneticus (strain ATCC 700980 / DSM 13731 / RS-1) (Desulfovibrio magneticus), this protein is Pyridoxine 5'-phosphate synthase.